We begin with the raw amino-acid sequence, 298 residues long: Protease HtpX homolog (298 aa).

2 helical membrane passes run 15–35 (LIMV…GYLF) and 38–58 (SPWT…LIMW). A Zn(2+)-binding site is contributed by His143. Glu144 is a catalytic residue. His147 provides a ligand contact to Zn(2+). 2 helical membrane passes run 153 to 173 (ILLS…SGIA) and 197 to 217 (IIFK…SASL). Glu227 provides a ligand contact to Zn(2+).

The protein belongs to the peptidase M48B family. It depends on Zn(2+) as a cofactor.

The protein resides in the cell membrane. The protein is Protease HtpX homolog of Lactobacillus acidophilus (strain ATCC 700396 / NCK56 / N2 / NCFM).